Reading from the N-terminus, the 216-residue chain is Cytidylate kinase (216 aa).

An ATP-binding site is contributed by 7 to 15 (GPSGTGKST).

Belongs to the cytidylate kinase family. Type 1 subfamily.

The protein localises to the cytoplasm. The catalysed reaction is CMP + ATP = CDP + ADP. It carries out the reaction dCMP + ATP = dCDP + ADP. In Chlamydia pneumoniae (Chlamydophila pneumoniae), this protein is Cytidylate kinase.